The chain runs to 290 residues: Ribosomal RNA small subunit methyltransferase A (290 aa).

Residues Asn27, Leu29, Gly54, Glu75, Asp100, and Asn125 each contribute to the S-adenosyl-L-methionine site.

The protein belongs to the class I-like SAM-binding methyltransferase superfamily. rRNA adenine N(6)-methyltransferase family. RsmA subfamily.

It is found in the cytoplasm. It carries out the reaction adenosine(1518)/adenosine(1519) in 16S rRNA + 4 S-adenosyl-L-methionine = N(6)-dimethyladenosine(1518)/N(6)-dimethyladenosine(1519) in 16S rRNA + 4 S-adenosyl-L-homocysteine + 4 H(+). Functionally, specifically dimethylates two adjacent adenosines (A1518 and A1519) in the loop of a conserved hairpin near the 3'-end of 16S rRNA in the 30S particle. May play a critical role in biogenesis of 30S subunits. In Streptococcus sanguinis (strain SK36), this protein is Ribosomal RNA small subunit methyltransferase A.